Consider the following 212-residue polypeptide: Adenylate kinase (212 aa).

Position 10-15 (10-15) interacts with ATP; the sequence is GAGKGT. The interval 30–59 is NMP; the sequence is AIGDIFRAIIKTSSKDAEVINSYVEQGKLI. AMP-binding positions include arginine 36, 57 to 59, 85 to 88, and glutamine 92; these read KLI and GYPR. Residues 122-160 are LID; sequence GRYSCKSCGKIYNDYFLKPRIDKICDVCKSSVFEYRKDD. An ATP-binding site is contributed by arginine 123. Residues cysteine 126 and cysteine 129 each contribute to the Zn(2+) site. An ATP-binding site is contributed by 132 to 133; it reads IY. Zn(2+) is bound by residues cysteine 146 and cysteine 149. AMP contacts are provided by arginine 157 and arginine 168. Residue lysine 196 participates in ATP binding.

This sequence belongs to the adenylate kinase family. Monomer.

The protein localises to the cytoplasm. The catalysed reaction is AMP + ATP = 2 ADP. Its pathway is purine metabolism; AMP biosynthesis via salvage pathway; AMP from ADP: step 1/1. Functionally, catalyzes the reversible transfer of the terminal phosphate group between ATP and AMP. Plays an important role in cellular energy homeostasis and in adenine nucleotide metabolism. The polypeptide is Adenylate kinase (Rickettsia bellii (strain RML369-C)).